We begin with the raw amino-acid sequence, 242 residues long: Prosalusin (242 aa).

The N-terminal stretch at 1–26 is a signal peptide; sequence MAAATRSCRPWGSLLGLIWLVSAAAA. The propeptide occupies 27–189; it reads SWDLSSLRCN…SSWVVYGTNY (163 aa). An ATP-binding site is contributed by 93–100; the sequence is GWTGTGKS. Residue Asn149 is glycosylated (N-linked (GlcNAc...) asparagine).

It belongs to the ClpA/ClpB family. Torsin subfamily.

The protein resides in the secreted. Its function is as follows. Salusin may be a endocrine and/or paracrine factor able to increase intracellular calcium concentrations and induce cell mitogenesis. Salusin may also be a potent hypotensive peptide. In Bos taurus (Bovine), this protein is Prosalusin (TOR2A).